Reading from the N-terminus, the 549-residue chain is Cytoplasmic trehalase (549 aa).

Residues Arg-168, 175–176 (WD), Asn-212, 221–223 (RSQ), 292–294 (RDE), and Gly-324 contribute to the substrate site. Residues Asp-326 and Glu-509 each act as proton donor/acceptor in the active site. Residue Glu-525 coordinates substrate.

The protein belongs to the glycosyl hydrolase 37 family. In terms of assembly, monomer.

It is found in the cytoplasm. It catalyses the reaction alpha,alpha-trehalose + H2O = alpha-D-glucose + beta-D-glucose. It functions in the pathway glycan degradation; trehalose degradation; D-glucose from alpha,alpha-trehalose: step 1/1. Hydrolyzes trehalose to glucose. Could be involved, in cells returning to low osmolarity conditions, in the utilization of the accumulated cytoplasmic trehalose, which was synthesized in response to high osmolarity. This chain is Cytoplasmic trehalase, found in Shigella flexneri serotype 5b (strain 8401).